The chain runs to 147 residues: Hemoglobin subunit gamma (147 aa).

The Globin domain occupies 3 to 147 (NFTAEDKAAI…VASALGSRYH (145 aa)). His-64 and His-93 together coordinate heme b.

The protein belongs to the globin family. In terms of assembly, heterotetramer of two alpha chains and two gamma chains in fetal hemoglobin (Hb F). As to expression, red blood cells.

Functionally, gamma chains make up the fetal hemoglobin F, in combination with alpha chains. In Aotus azarae (Azara's night monkey), this protein is Hemoglobin subunit gamma (HBG).